Here is a 114-residue protein sequence, read N- to C-terminus: MDVIKQIEQEQMRYDLPQFEAGDTVNVHVRIIEGTKERLQAFKGVVIAKKSGTTNATFTVRKVSYGVGVERVFHAHSPSIDHIEVVSRGKVRRAKLYYLRKLRGKAARIKEKRF.

Belongs to the bacterial ribosomal protein bL19 family.

Functionally, this protein is located at the 30S-50S ribosomal subunit interface and may play a role in the structure and function of the aminoacyl-tRNA binding site. This is Large ribosomal subunit protein bL19 from Desulfatibacillum aliphaticivorans.